Here is a 307-residue protein sequence, read N- to C-terminus: Ubiquinol oxidase subunit 2 (307 aa).

Positions 1-23 (MKNKLLARVARLGGLSSALLLAG) are cleaved as a signal peptide. Cysteine 24 carries N-palmitoyl cysteine lipidation. Cysteine 24 carries S-diacylglycerol cysteine lipidation. The next 2 helical transmembrane spans lie at 46 to 66 (STVAMLIVVIPTILETLLFAW) and 87 to 107 (IEVTIWGVPSLIILFLAVITY).

The protein belongs to the cytochrome c oxidase subunit 2 family. Heterotetramer of the subunits 1, 2, 3 and 4.

It localises to the cell membrane. The chain is Ubiquinol oxidase subunit 2 (cyaB) from Acetobacter aceti.